Reading from the N-terminus, the 568-residue chain is Urease subunit alpha (568 aa).

Residues His-134, His-136, and Lys-217 each contribute to the Ni(2+) site. N6-carboxylysine is present on Lys-217. His-219 provides a ligand contact to substrate. Residues His-246 and His-272 each contribute to the Ni(2+) site. The Proton donor role is filled by His-320. Position 360 (Asp-360) interacts with Ni(2+).

Belongs to the metallo-dependent hydrolases superfamily. Urease alpha subunit family. As to quaternary structure, heterotrimer of UreA (gamma), UreB (beta) and UreC (alpha) subunits. Three heterotrimers associate to form the active enzyme. Requires Ni cation as cofactor. In terms of processing, carboxylation allows a single lysine to coordinate two nickel ions.

The protein localises to the cytoplasm. It catalyses the reaction urea + 2 H2O + H(+) = hydrogencarbonate + 2 NH4(+). It functions in the pathway nitrogen metabolism; urea degradation; CO(2) and NH(3) from urea (urease route): step 1/1. In Marinomonas sp. (strain MWYL1), this protein is Urease subunit alpha.